Here is a 195-residue protein sequence, read N- to C-terminus: Probable GTP-binding protein EngB (195 aa).

The EngB-type G domain maps to 24 to 195; the sequence is ELPEIALAGR…EAWDAILEKL (172 aa). GTP-binding positions include 32–39, 59–63, 77–80, 144–147, and 176–178; these read GRSNVGKS, GKTQL, DVPG, TKAD, and FSS. Positions 39 and 61 each coordinate Mg(2+).

This sequence belongs to the TRAFAC class TrmE-Era-EngA-EngB-Septin-like GTPase superfamily. EngB GTPase family. Mg(2+) serves as cofactor.

In terms of biological role, necessary for normal cell division and for the maintenance of normal septation. This is Probable GTP-binding protein EngB from Streptococcus pneumoniae (strain JJA).